The chain runs to 308 residues: D-alanine--D-alanine ligase (308 aa).

Residues 104 to 301 (KQIWQGSDLP…FDELCVAILE (198 aa)) enclose the ATP-grasp domain. 130–185 (IAELGLPVIIKPVHEGSSVGMSKVEKAEDFAAAIEKATQHDAVVMAEKWITGREFT) lines the ATP pocket. Residues Asp255, Glu268, and Asn270 each contribute to the Mg(2+) site.

The protein belongs to the D-alanine--D-alanine ligase family. The cofactor is Mg(2+). Requires Mn(2+) as cofactor.

It localises to the cytoplasm. The catalysed reaction is 2 D-alanine + ATP = D-alanyl-D-alanine + ADP + phosphate + H(+). Its pathway is cell wall biogenesis; peptidoglycan biosynthesis. Cell wall formation. The sequence is that of D-alanine--D-alanine ligase from Acinetobacter baumannii (strain SDF).